The following is a 546-amino-acid chain: Methionine--tRNA ligase (546 aa).

The short motif at 15-25 is the 'HIGH' region element; it reads PYANGPIHLGH. Positions 146, 149, 159, and 162 each coordinate Zn(2+). Positions 332 to 336 match the 'KMSKS' region motif; sequence KMSKS. Residue Lys335 coordinates ATP.

It belongs to the class-I aminoacyl-tRNA synthetase family. MetG type 1 subfamily. Monomer. Requires Zn(2+) as cofactor.

The protein localises to the cytoplasm. The enzyme catalyses tRNA(Met) + L-methionine + ATP = L-methionyl-tRNA(Met) + AMP + diphosphate. Functionally, is required not only for elongation of protein synthesis but also for the initiation of all mRNA translation through initiator tRNA(fMet) aminoacylation. In Coxiella burnetii (strain Dugway 5J108-111), this protein is Methionine--tRNA ligase.